Consider the following 89-residue polypeptide: Large ribosomal subunit protein eL34 (89 aa).

The tract at residues 1–29 (MSAPRFRNGTFKRTLKRVPGGRKVEHYKK) is disordered. Residues 13-29 (RTLKRVPGGRKVEHYKK) are compositionally biased toward basic residues.

This sequence belongs to the eukaryotic ribosomal protein eL34 family.

The protein is Large ribosomal subunit protein eL34 of Methanosphaera stadtmanae (strain ATCC 43021 / DSM 3091 / JCM 11832 / MCB-3).